Here is a 746-residue protein sequence, read N- to C-terminus: Probably inactive copalyl diphosphate synthase 3 (746 aa).

The DXDD motif; degenerated signature appears at D331–D334.

This sequence belongs to the terpene synthase family. Tpsc subfamily. As to expression, mostly expressed in stems, and, at low levels, in roots and leaves, but barely in flowers.

The sequence is that of Probably inactive copalyl diphosphate synthase 3 from Isodon rubescens (Rabdosia rubescens).